A 552-amino-acid polypeptide reads, in one-letter code: uncharacterized protein (552 aa).

In terms of domain architecture, DhaL spans 8–200 (KLFADMIIQG…LLCVYEGFLK (193 aa)).

This is an uncharacterized protein from Staphylococcus epidermidis (strain ATCC 12228 / FDA PCI 1200).